Here is a 148-residue protein sequence, read N- to C-terminus: Urease accessory protein UreE (148 aa).

The protein belongs to the UreE family.

It localises to the cytoplasm. Functionally, involved in urease metallocenter assembly. Binds nickel. Probably functions as a nickel donor during metallocenter assembly. The protein is Urease accessory protein UreE of Halalkalibacterium halodurans (strain ATCC BAA-125 / DSM 18197 / FERM 7344 / JCM 9153 / C-125) (Bacillus halodurans).